A 300-amino-acid polypeptide reads, in one-letter code: 1D-myo-inositol 2-acetamido-2-deoxy-alpha-D-glucopyranoside deacetylase (300 aa).

Residues histidine 13, aspartate 16, and histidine 147 each contribute to the Zn(2+) site.

Belongs to the MshB deacetylase family. The cofactor is Zn(2+).

The catalysed reaction is 1D-myo-inositol 2-acetamido-2-deoxy-alpha-D-glucopyranoside + H2O = 1D-myo-inositol 2-amino-2-deoxy-alpha-D-glucopyranoside + acetate. Functionally, catalyzes the deacetylation of 1D-myo-inositol 2-acetamido-2-deoxy-alpha-D-glucopyranoside (GlcNAc-Ins) in the mycothiol biosynthesis pathway. In Mycobacterium avium (strain 104), this protein is 1D-myo-inositol 2-acetamido-2-deoxy-alpha-D-glucopyranoside deacetylase.